The following is a 372-amino-acid chain: N-methyl-L-tryptophan oxidase (372 aa).

4 to 34 serves as a coordination point for FAD; it reads DLIIIGSGSVGAAAGYYATRAGLNVLMTDAH. Cys-308 carries the S-8alpha-FAD cysteine modification.

Belongs to the MSOX/MTOX family. MTOX subfamily. As to quaternary structure, monomer. FAD is required as a cofactor.

The enzyme catalyses N(alpha)-methyl-L-tryptophan + O2 + H2O = L-tryptophan + formaldehyde + H2O2. Its function is as follows. Catalyzes the oxidative demethylation of N-methyl-L-tryptophan. This Escherichia coli O9:H4 (strain HS) protein is N-methyl-L-tryptophan oxidase.